The sequence spans 473 residues: Ribosomal RNA small subunit methyltransferase F (473 aa).

Residues 123–129 (AAAPGSK), E147, D174, and D192 contribute to the S-adenosyl-L-methionine site. The Nucleophile role is filled by C245.

The protein belongs to the class I-like SAM-binding methyltransferase superfamily. RsmB/NOP family.

The protein localises to the cytoplasm. It carries out the reaction cytidine(1407) in 16S rRNA + S-adenosyl-L-methionine = 5-methylcytidine(1407) in 16S rRNA + S-adenosyl-L-homocysteine + H(+). In terms of biological role, specifically methylates the cytosine at position 1407 (m5C1407) of 16S rRNA. This Vibrio cholerae serotype O1 (strain ATCC 39315 / El Tor Inaba N16961) protein is Ribosomal RNA small subunit methyltransferase F.